Here is a 162-residue protein sequence, read N- to C-terminus: 2-C-methyl-D-erythritol 2,4-cyclodiphosphate synthase (162 aa).

A divalent metal cation-binding residues include Asp-9 and His-11. 4-CDP-2-C-methyl-D-erythritol 2-phosphate-binding positions include 9-11 (DVH) and 35-36 (HS). Residue His-43 coordinates a divalent metal cation. 4-CDP-2-C-methyl-D-erythritol 2-phosphate is bound by residues 57 to 59 (DIG), 62 to 66 (FPDTD), 133 to 136 (TTTE), Phe-140, and Arg-143.

It belongs to the IspF family. Homotrimer. Requires a divalent metal cation as cofactor.

The catalysed reaction is 4-CDP-2-C-methyl-D-erythritol 2-phosphate = 2-C-methyl-D-erythritol 2,4-cyclic diphosphate + CMP. It participates in isoprenoid biosynthesis; isopentenyl diphosphate biosynthesis via DXP pathway; isopentenyl diphosphate from 1-deoxy-D-xylulose 5-phosphate: step 4/6. Involved in the biosynthesis of isopentenyl diphosphate (IPP) and dimethylallyl diphosphate (DMAPP), two major building blocks of isoprenoid compounds. Catalyzes the conversion of 4-diphosphocytidyl-2-C-methyl-D-erythritol 2-phosphate (CDP-ME2P) to 2-C-methyl-D-erythritol 2,4-cyclodiphosphate (ME-CPP) with a corresponding release of cytidine 5-monophosphate (CMP). This is 2-C-methyl-D-erythritol 2,4-cyclodiphosphate synthase from Histophilus somni (strain 2336) (Haemophilus somnus).